A 508-amino-acid polypeptide reads, in one-letter code: MNISILRLDSNPITTATSPATATANHRSGILGCYNGTYSCRLNQLQQRKKNPSIIVCSTTKPLASVVDRHGVSESGLSRIESLSQVSGVLGCQWGDEGKGKLVDILAKHFDIVARCQGGANAGHTIYNSEGKKFALHLVPSGILNEETVCVIGNGVVVHLPGLFKEIDGLESNGVSCQGRILVSDRAHLLFDFHQEIDGLREAELAKSFIGTTKRGIGPCYSSKVIRNGIRVSDLRHMDTFPQKLDRLLSDAAARFPGFKYGPEMLREEVERYKKFAERLEPFITDTVHFMNDAISQKKKILVEGGQATMLDIDFGTYPFVTSSSPSAGGICTGLGIAPRVVGDLVGVVKAYTTRVGSGPFPTEIMGKGGDLLRFAGQEFGTTTGRPRRCGWLDIVALRYCCQINGFASLNLTKLDVLSDLSEIQLGVTYRHPDGSILNSFPSDLRLLEQLKVEYEVLRGWQSDISSIRKYSDLPKSAREYVERIEELVGVPIHYIGIGPGRDALIYK.

The transit peptide at 1 to 56 (MNISILRLDSNPITTATSPATATANHRSGILGCYNGTYSCRLNQLQQRKKNPSIIV) directs the protein to the chloroplast. GTP-binding positions include 95–101 (GDEGKGK) and 123–125 (GHT). D96 serves as the catalytic Proton acceptor. D96 and G123 together coordinate Mg(2+). Residues 96-99 (DEGK), 121-124 (NAGH), T213, R227, Q307, T322, and R386 each bind IMP. H124 acts as the Proton donor in catalysis. 382–388 (TTTGRPR) lines the substrate pocket. GTP-binding positions include R388, 414-416 (KLD), and 497-499 (GIG).

Belongs to the adenylosuccinate synthetase family. In terms of assembly, homodimer. The cofactor is Mg(2+).

It localises to the plastid. It is found in the chloroplast. The catalysed reaction is IMP + L-aspartate + GTP = N(6)-(1,2-dicarboxyethyl)-AMP + GDP + phosphate + 2 H(+). It functions in the pathway purine metabolism; AMP biosynthesis via de novo pathway; AMP from IMP: step 1/2. Its function is as follows. Plays an important role in the de novo pathway and in the salvage pathway of purine nucleotide biosynthesis. Catalyzes the first committed step in the biosynthesis of AMP from IMP. This is Adenylosuccinate synthetase 1, chloroplastic from Capsicum frutescens (Cayenne pepper).